Here is a 78-residue protein sequence, read N- to C-terminus: RNA-binding protein KhpA (78 aa).

The KH domain maps to Thr-29–Lys-78.

The protein belongs to the KhpA RNA-binding protein family.

The protein resides in the cytoplasm. Its function is as follows. A probable RNA-binding protein. This Chlamydia caviae (strain ATCC VR-813 / DSM 19441 / 03DC25 / GPIC) (Chlamydophila caviae) protein is RNA-binding protein KhpA.